The following is a 353-amino-acid chain: Nicotinate-nucleotide--dimethylbenzimidazole phosphoribosyltransferase (353 aa).

The active-site Proton acceptor is E319.

The protein belongs to the CobT family.

It catalyses the reaction 5,6-dimethylbenzimidazole + nicotinate beta-D-ribonucleotide = alpha-ribazole 5'-phosphate + nicotinate + H(+). It participates in nucleoside biosynthesis; alpha-ribazole biosynthesis; alpha-ribazole from 5,6-dimethylbenzimidazole: step 1/2. In terms of biological role, catalyzes the synthesis of alpha-ribazole-5'-phosphate from nicotinate mononucleotide (NAMN) and 5,6-dimethylbenzimidazole (DMB). The sequence is that of Nicotinate-nucleotide--dimethylbenzimidazole phosphoribosyltransferase from Prosthecochloris aestuarii (strain DSM 271 / SK 413).